Here is a 159-residue protein sequence, read N- to C-terminus: Eukaryotic translation initiation factor 5A (159 aa).

The span at M1 to A12 shows a compositional bias: basic and acidic residues. Positions M1 to Q23 are disordered. K52 carries the hypusine modification.

Belongs to the eIF-5A family. Post-translationally, lys-52 undergoes hypusination, a unique post-translational modification that consists in the addition of a butylamino group from spermidine to lysine side chain, leading to the formation of the unusual amino acid hypusine. eIF-5As are the only known proteins to undergo this modification, which is essential for their function.

Functionally, translation factor that promotes translation elongation and termination, particularly upon ribosome stalling at specific amino acid sequence contexts. Binds between the exit (E) and peptidyl (P) site of the ribosome and promotes rescue of stalled ribosome: specifically required for efficient translation of polyproline-containing peptides as well as other motifs that stall the ribosome. Acts as a ribosome quality control (RQC) cofactor by joining the RQC complex to facilitate peptidyl transfer during CAT tailing step. In Senecio vernalis (Spring groundsel), this protein is Eukaryotic translation initiation factor 5A (EIFSV1).